A 229-amino-acid polypeptide reads, in one-letter code: uncharacterized protein (229 aa).

The signal sequence occupies residues 1–26 (MSRNDARYLRCTAALGAAFFACGAAA).

The protein belongs to the OmpW/AlkL family.

Its subcellular location is the cell outer membrane. This is an uncharacterized protein from Sinorhizobium fredii (strain NBRC 101917 / NGR234).